The chain runs to 299 residues: N-acetylaspartate synthetase (299 aa).

Residues 44–57 (AAPGPAAAPPPAAG) are compositionally biased toward pro residues. The segment at 44 to 70 (AAPGPAAAPPPAAGPQPHGGTGGAGPP) is disordered. Over residues 60 to 70 (PHGGTGGAGPP) the composition is skewed to gly residues. A helical transmembrane segment spans residues 118 to 138 (YALLAALCFAVTRSLLLTCLV). Residues 143-280 (LALRYYYSRK…VLPGMTLSLA (138 aa)) enclose the N-acetyltransferase domain.

Belongs to the NAT8 family. As to expression, expressed in brain, including in mesencephalic dopaminergic neurons of the substantia nigra and ventral tegmental area and oligodendrocytes. Expressed in cortical pyramidal neurons and granule cells of the hippocampus (at protein level).

Its subcellular location is the cytoplasm. It is found in the microsome membrane. The protein localises to the mitochondrion membrane. It localises to the endoplasmic reticulum membrane. The catalysed reaction is L-aspartate + acetyl-CoA = N-acetyl-L-aspartate + CoA + H(+). Its activity is regulated as follows. Aminooxyacetic acid (AOAA) blocks its activity in both cytoplasm and mitochondria. Its function is as follows. Catalyzes the synthesis of N-acetylaspartate acid (NAA) from L-aspartate and acetyl-CoA. Promotes dopamine uptake by regulating TNF-alpha expression. Attenuates methamphetamine-induced inhibition of dopamine uptake. This chain is N-acetylaspartate synthetase (Nat8l), found in Rattus norvegicus (Rat).